The chain runs to 201 residues: Large ribosomal subunit protein uL4 (201 aa).

Positions 44-68 are disordered; the sequence is RAQKSRAEVSGSGRKPWRQKGTGRA.

Belongs to the universal ribosomal protein uL4 family. As to quaternary structure, part of the 50S ribosomal subunit.

Its function is as follows. One of the primary rRNA binding proteins, this protein initially binds near the 5'-end of the 23S rRNA. It is important during the early stages of 50S assembly. It makes multiple contacts with different domains of the 23S rRNA in the assembled 50S subunit and ribosome. Functionally, forms part of the polypeptide exit tunnel. The protein is Large ribosomal subunit protein uL4 of Buchnera aphidicola subsp. Acyrthosiphon pisum (strain 5A).